A 237-amino-acid polypeptide reads, in one-letter code: Mediator of RNA polymerase II transcription subunit 20 (237 aa).

This sequence belongs to the Mediator complex subunit 20 family. In terms of assembly, component of the Mediator complex.

The protein resides in the nucleus. Component of the Mediator complex, a coactivator involved in the regulated transcription of nearly all RNA polymerase II-dependent genes. Mediator functions as a bridge to convey information from gene-specific regulatory proteins to the basal RNA polymerase II transcription machinery. Mediator is recruited to promoters by direct interactions with regulatory proteins and serves as a scaffold for the assembly of a functional preinitiation complex with RNA polymerase II and the general transcription factors. In Scheffersomyces stipitis (strain ATCC 58785 / CBS 6054 / NBRC 10063 / NRRL Y-11545) (Yeast), this protein is Mediator of RNA polymerase II transcription subunit 20 (SRB2).